A 383-amino-acid polypeptide reads, in one-letter code: MAGIPGLLFLLFLLLCAVGQVSPYSAPWKPTWPAYRLPVVLPQSTLSLAKPDFGAEAKLEVSSSCGPQCHKGTPLPTYEEAKQYLSYETLYANGSRTETQVGIYILSSSGGGAQHRDSGSSGKSRRKRQIYGYDSRFSIFGKDFLLNYPFSTSVKLSTGCTGTLVAEKHVLTAAHCIHDGKTYVKGTQKLRVGFLKPKFKDGGRGANDSTSAMPEKMKFQWIRVKRTHVPKGWIKGNANDIGMDYDYALLELKKPHKRKFMKIGVSPPAKQLPGGRIHFSGYDNDRPGNLVYRFCDVKDETYDLLYQQCDAQPGASGSGVYVRMWKRQQQKWERKIIGIFSGHQWVDMNGSPQDFNVAVRITPLKYAQICYWIKGNYLDCREG.

Residues 1 to 19 form the signal peptide; it reads MAGIPGLLFLLFLLLCAVG. The N-linked (GlcNAc...) asparagine glycan is linked to Asn-93. The interval 108 to 127 is disordered; the sequence is SSGGGAQHRDSGSSGKSRRK. Phosphoserine; by FAM20C is present on Ser-109. Cys-160 and Cys-176 form a disulfide bridge. The active-site Charge relay system is the His-175. The N-linked (GlcNAc...) asparagine glycan is linked to Asn-207. Active-site charge relay system residues include Asp-240 and Ser-316.

Belongs to the peptidase S1 family.

It is found in the secreted. This is Serine protease 23 (PRSS23) from Macaca mulatta (Rhesus macaque).